We begin with the raw amino-acid sequence, 156 residues long: Keratin, high-sulfur matrix protein, B2B (156 aa).

Alanine 1 bears the N-acetylalanine mark. 4 repeats span residues 26-35 (PTCSQTSCCQ), 36-45 (PTSIQTSCCQ), 46-55 (PISIQTSCCQ), and 56-65 (PTCLQTSGCE).

Its function is as follows. The keratin products of mammalian epidermal derivatives such as wool and hair consist of microfibrils embedded in a rigid matrix of other proteins. The matrix proteins include the high-sulfur and high-tyrosine keratins, having molecular weights of 6-20 kDa, whereas the microfibrils contain the larger, low-sulfur keratins (40-56 kDa). This chain is Keratin, high-sulfur matrix protein, B2B, found in Ovis aries (Sheep).